A 207-amino-acid chain; its full sequence is Outer-membrane lipoprotein LolB (207 aa).

A signal peptide spans 1-21 (MPLPDFRLIRLLPLAALVLTA). A lipid anchor (N-palmitoyl cysteine) is attached at Cys22. A lipid anchor (S-diacylglycerol cysteine) is attached at Cys22.

It belongs to the LolB family. In terms of assembly, monomer.

Its subcellular location is the cell outer membrane. Its function is as follows. Plays a critical role in the incorporation of lipoproteins in the outer membrane after they are released by the LolA protein. This Shigella boydii serotype 18 (strain CDC 3083-94 / BS512) protein is Outer-membrane lipoprotein LolB.